The following is a 410-amino-acid chain: Argininosuccinate synthase (410 aa).

Residues 11 to 19 (AYSGGLDTS) and Ala-37 contribute to the ATP site. 2 residues coordinate L-citrulline: Tyr-88 and Ser-93. 116 to 124 (SHGCTGKGN) contacts ATP. Residues Thr-120, Asn-124, and Asp-125 each contribute to the L-aspartate site. Asn-124 contacts L-citrulline. 5 residues coordinate L-citrulline: Arg-128, Ser-181, Ser-190, Glu-269, and Tyr-281.

This sequence belongs to the argininosuccinate synthase family. Type 1 subfamily. In terms of assembly, homotetramer.

It is found in the cytoplasm. It carries out the reaction L-citrulline + L-aspartate + ATP = 2-(N(omega)-L-arginino)succinate + AMP + diphosphate + H(+). The protein operates within amino-acid biosynthesis; L-arginine biosynthesis; L-arginine from L-ornithine and carbamoyl phosphate: step 2/3. The chain is Argininosuccinate synthase (arg12) from Schizosaccharomyces pombe (strain 972 / ATCC 24843) (Fission yeast).